Reading from the N-terminus, the 738-residue chain is Eukaryotic translation initiation factor 3 subunit B (738 aa).

Polar residues predominate over residues 1-10 (MAPSFENLSE). Positions 1–20 (MAPSFENLSEQDLHEEEEEE) are disordered. In terms of domain architecture, RRM spans 40 to 126 (TFVVIDGLPV…HTLLVNKLMD (87 aa)). 6 WD repeats span residues 193–230 (AHWT…KQKQ), 232–289 (PHPF…RSFV), 301–342 (QPKK…LLGK), 454–494 (SLKD…SFFA), 511–554 (IEKK…EKND), and 569–607 (VDHY…HTFS). The interval 693 to 720 (EAYGLPEEADQPKAAKDAPTNTEDKGET) is disordered. Basic and acidic residues predominate over residues 702–720 (DQPKAAKDAPTNTEDKGET).

This sequence belongs to the eIF-3 subunit B family. Component of the eukaryotic translation initiation factor 3 (eIF-3) complex.

It is found in the cytoplasm. RNA-binding component of the eukaryotic translation initiation factor 3 (eIF-3) complex, which is involved in protein synthesis of a specialized repertoire of mRNAs and, together with other initiation factors, stimulates binding of mRNA and methionyl-tRNAi to the 40S ribosome. The eIF-3 complex specifically targets and initiates translation of a subset of mRNAs involved in cell proliferation. In Emericella nidulans (strain FGSC A4 / ATCC 38163 / CBS 112.46 / NRRL 194 / M139) (Aspergillus nidulans), this protein is Eukaryotic translation initiation factor 3 subunit B (prt1).